Reading from the N-terminus, the 267-residue chain is Glucosamine-6-phosphate deaminase (267 aa).

Catalysis depends on D72, which acts as the Proton acceptor; for enolization step. D141 acts as the For ring-opening step in catalysis. The Proton acceptor; for ring-opening step role is filled by H143. E148 functions as the For ring-opening step in the catalytic mechanism.

It belongs to the glucosamine/galactosamine-6-phosphate isomerase family. NagB subfamily. As to quaternary structure, homohexamer.

It catalyses the reaction alpha-D-glucosamine 6-phosphate + H2O = beta-D-fructose 6-phosphate + NH4(+). It participates in amino-sugar metabolism; N-acetylneuraminate degradation; D-fructose 6-phosphate from N-acetylneuraminate: step 5/5. Its activity is regulated as follows. Allosterically activated by N-acetylglucosamine 6-phosphate (GlcNAc6P). In terms of biological role, catalyzes the reversible isomerization-deamination of glucosamine 6-phosphate (GlcN6P) to form fructose 6-phosphate (Fru6P) and ammonium ion. In Actinobacillus pleuropneumoniae serotype 3 (strain JL03), this protein is Glucosamine-6-phosphate deaminase.